A 285-amino-acid polypeptide reads, in one-letter code: Protein pxr1 (285 aa).

The span at 1-11 (MGLAAPRKKIK) shows a compositional bias: basic residues. The interval 1–23 (MGLAAPRKKIKISHDPNNTNWSR) is disordered. The region spanning 25-79 (TSGFGHKILSSQGWTPGSFLGARNAAHAEMFTAASASHIKVVLKDDTLGLGARPK) is the G-patch domain. The disordered stretch occupies residues 144–263 (TPIVTEEPQG…MGRHVFRGRH (120 aa)). A compositionally biased stretch (basic and acidic residues) spans 152–163 (QGIHKDKQEDKL). The span at 190-208 (KKKKSKSKNHREKKDRKRK) shows a compositional bias: basic residues. Residues 224 to 234 (RSTEKKSKATR) are compositionally biased toward basic and acidic residues. Basic residues predominate over residues 254-263 (MGRHVFRGRH).

It belongs to the PINX1 family.

Its subcellular location is the nucleus. It is found in the nucleolus. In terms of biological role, involved in rRNA-processing at A0, A1 and A2 sites and negatively regulates telomerase. The protein is Protein pxr1 (pxr1) of Aspergillus niger (strain ATCC MYA-4892 / CBS 513.88 / FGSC A1513).